The chain runs to 223 residues: Urease accessory protein UreF (223 aa).

The protein belongs to the UreF family. In terms of assembly, ureD, UreF and UreG form a complex that acts as a GTP-hydrolysis-dependent molecular chaperone, activating the urease apoprotein by helping to assemble the nickel containing metallocenter of UreC. The UreE protein probably delivers the nickel.

It localises to the cytoplasm. In terms of biological role, required for maturation of urease via the functional incorporation of the urease nickel metallocenter. This Sinorhizobium medicae (strain WSM419) (Ensifer medicae) protein is Urease accessory protein UreF.